Reading from the N-terminus, the 222-residue chain is Disulfide bond formation protein D (222 aa).

An N-terminal signal peptide occupies residues 1 to 36; the sequence is MKKKQQSSAKFAVILTVVVVVLLAAIVIINNKTEQG. The 184-residue stretch at 37–220 folds into the Thioredoxin domain; the sequence is NDAVSGQPSI…IKETIEKELK (184 aa). A disulfide bridge links Cys-69 with Cys-72.

The protein belongs to the thioredoxin family. DsbA subfamily.

It is found in the cell membrane. Its subcellular location is the membrane raft. Functionally, required for the stabilization, possibly via formation of a disulfide bond, of the obligatory competence protein ComGC. May be required for the stability of secreted proteins with disulfide bonds. Not required for sporulation. This chain is Disulfide bond formation protein D (bdbD), found in Bacillus subtilis (strain 168).